The primary structure comprises 397 residues: Polyphosphatase (397 aa).

Mg(2+) contacts are provided by Asp-41, Asp-127, and His-148. Mn(2+) is bound by residues Asp-41, Asp-127, and His-148. His-149, Ser-286, and Arg-381 together coordinate ATP.

This sequence belongs to the PPase class C family. The cofactor is Mn(2+). It depends on Mg(2+) as a cofactor.

The enzyme catalyses [phosphate](n) + H2O = [phosphate](n-1) + phosphate + H(+). Functionally, polyphosphatase (polyPase) involved in the degradation of inorganic polyphosphates (polyP) that is able to degrade a range of chains from three to several hundreds of residues in a highly processive manner. Exclusively shows exopolyphosphatase activity, cleaving inside the polyP chain. In Saccharomyces cerevisiae (strain ATCC 204508 / S288c) (Baker's yeast), this protein is Polyphosphatase.